A 26-amino-acid polypeptide reads, in one-letter code: Hemocyanin subunit 3 (26 aa).

The protein belongs to the tyrosinase family. Hemocyanin subfamily. Hemolymph.

Its subcellular location is the secreted. The protein resides in the extracellular space. Hemocyanins are copper-containing oxygen carriers occurring freely dissolved in the hemolymph of many mollusks and arthropods. This Homarus americanus (American lobster) protein is Hemocyanin subunit 3.